The chain runs to 75 residues: Cytochrome c oxidase subunit 6C (75 aa).

At 1–13 (MAPEVLPKPQMRG) the chain is on the mitochondrial matrix side. The helical transmembrane segment at 14–54 (LLAKRLRFHMVTAFVLSLGVAALYKFRVADKRKKAYADFYR) threads the bilayer. Topologically, residues 55-75 (NYDAMKDFEEMRKAGIFQSVK) are mitochondrial intermembrane.

Belongs to the cytochrome c oxidase subunit 6c family. In terms of assembly, component of the cytochrome c oxidase (complex IV, CIV), a multisubunit enzyme composed of 14 subunits. The complex is composed of a catalytic core of 3 subunits MT-CO1, MT-CO2 and MT-CO3, encoded in the mitochondrial DNA, and 11 supernumerary subunits COX4I, COX5A, COX5B, COX6A, COX6B, COX6C, COX7A, COX7B, COX7C, COX8 and NDUFA4, which are encoded in the nuclear genome. The complex exists as a monomer or a dimer and forms supercomplexes (SCs) in the inner mitochondrial membrane with NADH-ubiquinone oxidoreductase (complex I, CI) and ubiquinol-cytochrome c oxidoreductase (cytochrome b-c1 complex, complex III, CIII), resulting in different assemblies (supercomplex SCI(1)III(2)IV(1) and megacomplex MCI(2)III(2)IV(2)).

The protein resides in the mitochondrion inner membrane. The protein operates within energy metabolism; oxidative phosphorylation. Component of the cytochrome c oxidase, the last enzyme in the mitochondrial electron transport chain which drives oxidative phosphorylation. The respiratory chain contains 3 multisubunit complexes succinate dehydrogenase (complex II, CII), ubiquinol-cytochrome c oxidoreductase (cytochrome b-c1 complex, complex III, CIII) and cytochrome c oxidase (complex IV, CIV), that cooperate to transfer electrons derived from NADH and succinate to molecular oxygen, creating an electrochemical gradient over the inner membrane that drives transmembrane transport and the ATP synthase. Cytochrome c oxidase is the component of the respiratory chain that catalyzes the reduction of oxygen to water. Electrons originating from reduced cytochrome c in the intermembrane space (IMS) are transferred via the dinuclear copper A center (CU(A)) of subunit 2 and heme A of subunit 1 to the active site in subunit 1, a binuclear center (BNC) formed by heme A3 and copper B (CU(B)). The BNC reduces molecular oxygen to 2 water molecules using 4 electrons from cytochrome c in the IMS and 4 protons from the mitochondrial matrix. This Trachypithecus cristatus (Silvered leaf-monkey) protein is Cytochrome c oxidase subunit 6C (COX6C).